Reading from the N-terminus, the 251-residue chain is Ribosomal RNA small subunit methyltransferase J (251 aa).

S-adenosyl-L-methionine-binding positions include 100 to 101, 116 to 117, and Asp170; these read RD and ER.

Belongs to the methyltransferase superfamily. RsmJ family.

It localises to the cytoplasm. The enzyme catalyses guanosine(1516) in 16S rRNA + S-adenosyl-L-methionine = N(2)-methylguanosine(1516) in 16S rRNA + S-adenosyl-L-homocysteine + H(+). Functionally, specifically methylates the guanosine in position 1516 of 16S rRNA. This chain is Ribosomal RNA small subunit methyltransferase J, found in Actinobacillus pleuropneumoniae serotype 3 (strain JL03).